Consider the following 470-residue polypeptide: Flotillin-like protein 1 (470 aa).

Residue cysteine 35 is the site of S-palmitoyl cysteine attachment. Residues 305 to 354 (EYETKVQEANWELYNKQKQAEAVLYEKQKQAEAQKAQADAAFYSKQKEAE) adopt a coiled-coil conformation.

This sequence belongs to the band 7/mec-2 family. Flotillin subfamily. May be palmitoylated.

Its subcellular location is the cell membrane. The protein localises to the membrane. The protein resides in the caveola. In terms of biological role, may act as a scaffolding protein within caveolar membranes, functionally participating in formation of caveolae or caveolae-like vesicles. This Arabidopsis thaliana (Mouse-ear cress) protein is Flotillin-like protein 1 (FLOT1).